Reading from the N-terminus, the 398-residue chain is Inositol polyphosphate 5-phosphatase (398 aa).

It belongs to the inositol 1,4,5-trisphosphate 5-phosphatase type II family. As to expression, expressed in tail, cilia, dendrites, axon and male head.

It is found in the cytoplasm. Dephosphorylates a number of phosphatidylinositols. Controls the cellular levels and subcellular distribution of phosphatidylinositol 3,5-bisphosphate and phosphatidylinositol 3,4,5-trisphosphate. Has a role in sperm activation and motility. Influences the localization of the transient receptor potential polycystin (TRPP) complex proteins lov-1 and pkd-2. In Caenorhabditis elegans, this protein is Inositol polyphosphate 5-phosphatase.